The chain runs to 332 residues: Probable farnesyl diphosphate synthase (332 aa).

Positions 75, 78, and 107 each coordinate isopentenyl diphosphate. 2 residues coordinate Mg(2+): Asp-114 and Asp-120. Arg-125 is a binding site for (2E)-geranyl diphosphate. Arg-126 serves as a coordination point for isopentenyl diphosphate. (2E)-geranyl diphosphate is bound by residues Lys-208, Gln-250, and Lys-267.

This sequence belongs to the FPP/GGPP synthase family. Mg(2+) serves as cofactor.

It localises to the cytoplasm. The catalysed reaction is isopentenyl diphosphate + (2E)-geranyl diphosphate = (2E,6E)-farnesyl diphosphate + diphosphate. The sequence is that of Probable farnesyl diphosphate synthase from Sinorhizobium fredii (strain NBRC 101917 / NGR234).